The primary structure comprises 459 residues: Cysteine--tRNA ligase (459 aa).

Cysteine 28 contributes to the Zn(2+) binding site. A 'HIGH' region motif is present at residues 30 to 40; that stretch reads VTVYDLCHIGH. Residues cysteine 209, histidine 234, and glutamate 238 each contribute to the Zn(2+) site. A 'KMSKS' region motif is present at residues 266 to 270; it reads KMSKS. Lysine 269 is an ATP binding site.

The protein belongs to the class-I aminoacyl-tRNA synthetase family. Monomer. It depends on Zn(2+) as a cofactor.

It is found in the cytoplasm. The enzyme catalyses tRNA(Cys) + L-cysteine + ATP = L-cysteinyl-tRNA(Cys) + AMP + diphosphate. In Histophilus somni (strain 2336) (Haemophilus somnus), this protein is Cysteine--tRNA ligase.